Reading from the N-terminus, the 402-residue chain is Flavohemoprotein (402 aa).

The Globin domain occupies 1 to 136 (MLSEKTIEIV…IADAFISIEA (136 aa)). His85 lines the heme b pocket. Active-site charge relay system residues include Tyr95 and Glu135. The segment at 147–402 (GGWKDFRNFV…EFFGPAASLQ (256 aa)) is reductase. One can recognise an FAD-binding FR-type domain in the interval 150–260 (KDFRNFVVVK…SAPAGDFVLN (111 aa)). FAD-binding positions include Tyr188 and 204–207 (RQYS). 273–278 (GVGITP) provides a ligand contact to NADP(+). 394-397 (FFGP) contributes to the FAD binding site.

Belongs to the globin family. Two-domain flavohemoproteins subfamily. This sequence in the C-terminal section; belongs to the flavoprotein pyridine nucleotide cytochrome reductase family. Heme b is required as a cofactor. FAD serves as cofactor.

The catalysed reaction is 2 nitric oxide + NADPH + 2 O2 = 2 nitrate + NADP(+) + H(+). It carries out the reaction 2 nitric oxide + NADH + 2 O2 = 2 nitrate + NAD(+) + H(+). In terms of biological role, is involved in NO detoxification in an aerobic process, termed nitric oxide dioxygenase (NOD) reaction that utilizes O(2) and NAD(P)H to convert NO to nitrate, which protects the bacterium from various noxious nitrogen compounds. Therefore, plays a central role in the inducible response to nitrosative stress. The sequence is that of Flavohemoprotein from Bacillus anthracis.